Here is a 476-residue protein sequence, read N- to C-terminus: tRNA(Ile)-lysidine synthase (476 aa).

ATP is bound at residue 30 to 35; sequence SGGPDS.

The protein belongs to the tRNA(Ile)-lysidine synthase family.

It is found in the cytoplasm. It catalyses the reaction cytidine(34) in tRNA(Ile2) + L-lysine + ATP = lysidine(34) in tRNA(Ile2) + AMP + diphosphate + H(+). Ligates lysine onto the cytidine present at position 34 of the AUA codon-specific tRNA(Ile) that contains the anticodon CAU, in an ATP-dependent manner. Cytidine is converted to lysidine, thus changing the amino acid specificity of the tRNA from methionine to isoleucine. This Bacillus cereus (strain ATCC 14579 / DSM 31 / CCUG 7414 / JCM 2152 / NBRC 15305 / NCIMB 9373 / NCTC 2599 / NRRL B-3711) protein is tRNA(Ile)-lysidine synthase.